Reading from the N-terminus, the 245-residue chain is Type I iodothyronine deiodinase (245 aa).

The Extracellular portion of the chain corresponds to 1 to 9 (LSIRVLLHK). Residues 10–30 (LLILLQVTLSVVVGKTMMILF) form a helical; Signal-anchor for type III membrane protein membrane-spanning segment. Residues 31-245 (PDTTKRYILK…EIRAVLEKLK (215 aa)) lie on the Cytoplasmic side of the membrane. Residue selenocysteine 123 is part of the active site. Residue selenocysteine 123 is a non-standard amino acid, selenocysteine.

This sequence belongs to the iodothyronine deiodinase family. As to quaternary structure, predominantly monomer. Can form homodimers but homodimerization is not essential for enzyme activity.

Its subcellular location is the cell membrane. The protein resides in the endoplasmic reticulum membrane. It localises to the basolateral cell membrane. The catalysed reaction is 3,3',5-triiodo-L-thyronine + iodide + A + H(+) = L-thyroxine + AH2. It catalyses the reaction 3,3',5'-triiodo-L-thyronine + iodide + A + H(+) = L-thyroxine + AH2. It carries out the reaction 3,3'-diiodo-L-thyronine + iodide + A + H(+) = 3,3',5'-triiodo-L-thyronine + AH2. The enzyme catalyses 3,3'-diiodo-L-thyronine + iodide + A + H(+) = 3,3',5-triiodo-L-thyronine + AH2. The catalysed reaction is 3'-iodo-L-thyronine + iodide + A + H(+) = 3',5'-diiodo-L-thyronine + AH2. It catalyses the reaction 3-iodo-L-thyronine + iodide + A + H(+) = 3,5-diiodo-L-thyronine + AH2. It carries out the reaction 3-iodo-L-thyronine + iodide + A + H(+) = 3,3'-diiodo-L-thyronine + AH2. The enzyme catalyses 3,3'-diiodothyronamine + iodide + A + H(+) = 3,3',5'-triiodothyronamine + AH2. The catalysed reaction is 3'-iodothyronamine + iodide + A + H(+) = 3',5'-diiodothyronamine + AH2. It catalyses the reaction 3-iodothyronamine + iodide + A + H(+) = 3,3'-diiodothyronamine + AH2. It carries out the reaction 3,3'-diiodothyronamine + iodide + A + H(+) = 3,3',5-triiodothyronamine + AH2. The enzyme catalyses 3-iodothyronamine + iodide + A + H(+) = 3,5-diiodothyronamine + AH2. The catalysed reaction is 3,3'-diiodo-L-thyronine sulfate + iodide + A + H(+) = 3,3',5'-triiodo-L-thyronine sulfate + AH2. It catalyses the reaction 3,3',5'-triiodo-L-thyronine sulfate + iodide + A + H(+) = L-thyroxine sulfate + AH2. It carries out the reaction 3,3'-diiodo-L-thyronine sulfate + iodide + A + H(+) = 3,3',5-triiodo-L-thyronine sulfate + AH2. Plays a crucial role in the metabolism of thyroid hormones (TH) and has specific roles in TH activation and inactivation by deiodination. Catalyzes the deiodiantion of L-thyroxine (T4) to 3,5,3'-triiodothyronine (T3) and 3,3',5'-triiodothyronine (rT3) to 3,3'-diiodothyronine (3,3'-T2) via outer-ring deiodination (ORD). Catalyzes the deiodiantion of T4 to rT3, T3 to 3,3'-T2, 3,5-diiodothyronine (3,5-T2) to 3-monoiodothyronine (3-T1) and 3,3'-T2 to 3-T1 via inner-ring deiodination (IRD). Catalyzes the deiodiantion of 3',5'-diiodothyronine (3',5'-T2) to 3'-monoiodothyronine (3'-T1) via ORD. Catalyzes the phenolic ring deiodinations of 3,3',5'-triiodothyronamine, 3',5'-diiodothyronamine and 3,3'-diiodothyronamine as well as tyrosyl ring deiodinations of 3,5,3'-triiodothyronamine and 3,5-diiodothyronamine. Catalyzes the deiodination of L-thyroxine sulfate and 3,3',5-triiodo-L-thyronine sulfate via IRD and of 3,3',5'-triiodo-L-thyronine sulfate via ORD. This is Type I iodothyronine deiodinase (DIO1) from Gallus gallus (Chicken).